A 185-amino-acid polypeptide reads, in one-letter code: Large ribosomal subunit protein bL25 (185 aa).

This sequence belongs to the bacterial ribosomal protein bL25 family. CTC subfamily. As to quaternary structure, part of the 50S ribosomal subunit; part of the 5S rRNA/L5/L18/L25 subcomplex. Contacts the 5S rRNA. Binds to the 5S rRNA independently of L5 and L18.

This is one of the proteins that binds to the 5S RNA in the ribosome where it forms part of the central protuberance. This Chlamydia trachomatis serovar L2 (strain ATCC VR-902B / DSM 19102 / 434/Bu) protein is Large ribosomal subunit protein bL25.